The sequence spans 430 residues: SH3 domain-containing protein PJ696.02 (430 aa).

The tract at residues 237–372 is disordered; that stretch reads EPEDIWGPSS…KPKFKQDSLG (136 aa). Over residues 263-277 the composition is skewed to basic and acidic residues; sequence RRGDSYRSNRSRAHD. Residue Ser285 is modified to Phosphoserine. A compositionally biased stretch (basic and acidic residues) spans 304–313; sequence SKMDNRRSKY. Thr316 is modified (phosphothreonine). Phosphoserine is present on residues Ser318 and Ser324. Tyr325 is subject to Phosphotyrosine. Residues Ser326, Ser354, and Ser406 each carry the phosphoserine modification. Residues 333-358 are compositionally biased toward low complexity; the sequence is VYSSDVSTESSSQFSSRSSEYSKPSR. In terms of domain architecture, SH3 spans 371 to 430; it reads LGPNQARAMYSFAGEQPGDLSFQKGDIIDIVERSGSHDDWWTGRIGYREGIFPANYVKLS.

It belongs to the SH3YL1 family.

This Schizosaccharomyces pombe (strain 972 / ATCC 24843) (Fission yeast) protein is SH3 domain-containing protein PJ696.02.